The primary structure comprises 198 residues: Autophagy-related protein 16 (198 aa).

Residues 24–177 (ELVQTCSQMA…NKELVDRWMK (154 aa)) adopt a coiled-coil conformation.

This sequence belongs to the ATG16 family. Homodimer. Part of the ATG5-ATG12/ATG16 complex. Several units of each may be present in this complex. Interacts directly with ATG12.

The protein localises to the preautophagosomal structure membrane. Stabilizes the ATG5-ATG12 conjugate. The ATG5-ATG12/ATG16 complex is required for efficient promotion of ATG8-conjugation to phosphatidylethanolamine and ATG8 localization to the pre-autophagosomal structure (PAS). Also recruits ATG3 to the PAS. Involved in endoplasmic reticulum-specific autophagic process and is essential for the survival of cells subjected to severe ER stress. Autophagy is required for proper vegetative growth, asexual/sexual reproduction, and full virulence. Autophagy is particularly involved in the biosynthesis of deoxynivalenol (DON), an important virulence determinant. In Gibberella zeae (strain ATCC MYA-4620 / CBS 123657 / FGSC 9075 / NRRL 31084 / PH-1) (Wheat head blight fungus), this protein is Autophagy-related protein 16.